The sequence spans 95 residues: Virion membrane protein OPG135 (95 aa).

The first 22 residues, 1 to 22 (MSCYTAILKSVGGLALFQDANG), serve as a signal peptide directing secretion. The Intravirion portion of the chain corresponds to 23–45 (AIDLCRHFFMYFCEQKLRPNSFW). The chain crosses the membrane as a helical span at residues 46-66 (FVVVRAIASMIMYLVLGIALL). Residues 67-83 (YISEQDDKKNTNNASNS) are Virion surface-facing. Residues 76–95 (NTNNASNSNKLNESSINSNS) are disordered. Over residues 77 to 95 (TNNASNSNKLNESSINSNS) the composition is skewed to low complexity. N-linked (GlcNAc...) asparagine; by host glycans are attached at residues Asn79 and Asn87.

Belongs to the oerthopoxvirus OPG135 family.

The protein localises to the virion membrane. It is found in the host cytoplasm. Its function is as follows. Envelope protein. Required for an early step in virion morphogenesis. The sequence is that of Virion membrane protein OPG135 (OPG135) from Homo sapiens (Human).